A 396-amino-acid chain; its full sequence is Queuine tRNA-ribosyltransferase catalytic subunit 1 (396 aa).

The active-site Proton acceptor is aspartate 99. Queuine is bound by residues 99 to 103 (DSGGF), aspartate 153, glutamine 196, and glycine 223. The tract at residues 254-260 (GVGYATD) is RNA binding. Aspartate 273 serves as the catalytic Nucleophile. Positions 278–282 (TRTAR) are RNA binding; important for wobble base 34 recognition. Zn(2+) contacts are provided by cysteine 311, cysteine 313, cysteine 316, and histidine 341.

It belongs to the queuine tRNA-ribosyltransferase family. In terms of assembly, heterodimer of a catalytic subunit qtrt1 and an accessory subunit qtrt2. The cofactor is Zn(2+).

It localises to the cytoplasm. It is found in the mitochondrion outer membrane. It catalyses the reaction guanosine(34) in tRNA + queuine = queuosine(34) in tRNA + guanine. In terms of biological role, catalytic subunit of the queuine tRNA-ribosyltransferase (TGT) that catalyzes the base-exchange of a guanine (G) residue with queuine (Q) at position 34 (anticodon wobble position) in tRNAs with GU(N) anticodons (tRNA-Asp, -Asn, -His and -Tyr), resulting in the hypermodified nucleoside queuosine (7-(((4,5-cis-dihydroxy-2-cyclopenten-1-yl)amino)methyl)-7-deazaguanosine). Catalysis occurs through a double-displacement mechanism. The nucleophile active site attacks the C1' of nucleotide 34 to detach the guanine base from the RNA, forming a covalent enzyme-RNA intermediate. The proton acceptor active site deprotonates the incoming queuine, allowing a nucleophilic attack on the C1' of the ribose to form the product. The chain is Queuine tRNA-ribosyltransferase catalytic subunit 1 from Xenopus laevis (African clawed frog).